The following is a 207-amino-acid chain: Uracil phosphoribosyltransferase (207 aa).

Residues R77, R102, and D129–S137 each bind 5-phospho-alpha-D-ribose 1-diphosphate. Uracil-binding positions include I192 and G197–A199. D198 serves as a coordination point for 5-phospho-alpha-D-ribose 1-diphosphate.

This sequence belongs to the UPRTase family. Requires Mg(2+) as cofactor.

It catalyses the reaction UMP + diphosphate = 5-phospho-alpha-D-ribose 1-diphosphate + uracil. It functions in the pathway pyrimidine metabolism; UMP biosynthesis via salvage pathway; UMP from uracil: step 1/1. Allosterically activated by GTP. Functionally, catalyzes the conversion of uracil and 5-phospho-alpha-D-ribose 1-diphosphate (PRPP) to UMP and diphosphate. The chain is Uracil phosphoribosyltransferase from Fervidobacterium nodosum (strain ATCC 35602 / DSM 5306 / Rt17-B1).